The primary structure comprises 162 residues: SsrA-binding protein (162 aa).

Residues 140–162 (EDRRHDIKERETKREMDRAMRRR) form a disordered region.

This sequence belongs to the SmpB family.

The protein resides in the cytoplasm. Required for rescue of stalled ribosomes mediated by trans-translation. Binds to transfer-messenger RNA (tmRNA), required for stable association of tmRNA with ribosomes. tmRNA and SmpB together mimic tRNA shape, replacing the anticodon stem-loop with SmpB. tmRNA is encoded by the ssrA gene; the 2 termini fold to resemble tRNA(Ala) and it encodes a 'tag peptide', a short internal open reading frame. During trans-translation Ala-aminoacylated tmRNA acts like a tRNA, entering the A-site of stalled ribosomes, displacing the stalled mRNA. The ribosome then switches to translate the ORF on the tmRNA; the nascent peptide is terminated with the 'tag peptide' encoded by the tmRNA and targeted for degradation. The ribosome is freed to recommence translation, which seems to be the essential function of trans-translation. This is SsrA-binding protein from Myxococcus xanthus (strain DK1622).